We begin with the raw amino-acid sequence, 210 residues long: 7-carboxy-7-deazaguanine synthase (210 aa).

Substrate contacts are provided by residues Ile-25–Gly-27 and Arg-40. Residues His-31–Pro-210 form the Radical SAM core domain. Cys-44, Cys-48, and Cys-51 together coordinate [4Fe-4S] cluster. Thr-84 provides a ligand contact to substrate. Residues Gly-86 and Ser-127–Lys-129 each bind S-adenosyl-L-methionine. Position 210 (Pro-210) interacts with substrate.

Belongs to the radical SAM superfamily. 7-carboxy-7-deazaguanine synthase family. In terms of assembly, homodimer. The cofactor is [4Fe-4S] cluster. Requires S-adenosyl-L-methionine as cofactor. Mg(2+) serves as cofactor.

The catalysed reaction is 6-carboxy-5,6,7,8-tetrahydropterin + H(+) = 7-carboxy-7-deazaguanine + NH4(+). The protein operates within purine metabolism; 7-cyano-7-deazaguanine biosynthesis. Catalyzes the complex heterocyclic radical-mediated conversion of 6-carboxy-5,6,7,8-tetrahydropterin (CPH4) to 7-carboxy-7-deazaguanine (CDG), a step common to the biosynthetic pathways of all 7-deazapurine-containing compounds. The sequence is that of 7-carboxy-7-deazaguanine synthase from Flavobacterium psychrophilum (strain ATCC 49511 / DSM 21280 / CIP 103535 / JIP02/86).